The sequence spans 1365 residues: Zinc finger protein 423 (1365 aa).

The segment covering 1-11 (MSRRKQAKPRS) has biased composition (basic residues). The segment at 1–69 (MSRRKQAKPR…SHDERVGEED (69 aa)) is disordered. Residues 37–51 (VSERDSDRKESRAVG) show a composition bias toward basic and acidic residues. The C2H2-type 1 zinc-finger motif lies at 76–98 (FTCDNCQQDFECLADLTEHRTNH). The disordered stretch occupies residues 99 to 126 (CPADGDDDPGLSWVASSPSSKDVASPSQ). Positions 112-126 (VASSPSSKDVASPSQ) are enriched in low complexity. C2H2-type zinc fingers lie at residues 150–172 (YPCQ…EQIH), 178–200 (FKCT…VKLH), 206–228 (YSCQ…LKTH), and 234–256 (FKCS…MQAH). Residues 250–280 (QSHMQAHRKNKEHLAKKDQGKRDGSSSDVTE) are disordered. Residues 261-274 (EHLAKKDQGKRDGS) show a composition bias toward basic and acidic residues. 3 consecutive C2H2-type zinc fingers follow at residues 286–309 (YMCD…LTQH), 318–341 (LQCI…DRTH), and 346–368 (HKCP…LDSH). The segment at 366 to 429 (DSHRQPDSSN…LAPSSDHDDG (64 aa)) is disordered. Residues 386–400 (SVASMSSATPDSSAS) are compositionally biased toward low complexity. Residues 437–461 (YSCPYCSKRDFNSLAVLEIHLKTIH) form a C2H2-type 9; degenerate zinc finger. C2H2-type zinc fingers lie at residues 469–492 (HTCQ…RKAH), 513–536 (FHCN…RVSH), and 555–578 (FFCN…QQTH). The segment at 603 to 628 (YSCPYCTNSPIFGSLLKLTKHIKENH) adopts a C2H2-type 13; atypical zinc-finger fold. 7 C2H2-type zinc fingers span residues 675–697 (YPCN…LKSH), 705–728 (QSCP…LTIH), 736–759 (YVCE…LDMH), 764–787 (YHCT…AVKH), 794–817 (YRCT…KHSH), 831–853 (RKCI…ITTH), and 857–880 (YNCR…REKH). Positions 885 to 895 (GGNGNGNGGSQ) are enriched in gly residues. A disordered region spans residues 885–916 (GGNGNGNGGSQNGTPNGVTQSSKRSTAGSTAA). The segment covering 902-913 (VTQSSKRSTAGS) has biased composition (polar residues). The C2H2-type 21; degenerate zinc-finger motif lies at 954–976 (YACDICGAAYTMESLLQNHRLRD). 8 consecutive C2H2-type zinc fingers follow at residues 1000–1022 (HKCN…AQTH), 1029–1051 (YMCP…KVTH), 1090–1112 (FRCV…GTFH), 1201–1224 (LRCS…QVDH), 1249–1271 (YQCI…VANH), 1279–1301 (HECK…LIEH), 1310–1333 (FKCP…FAVH), and 1340–1363 (YDCS…LSQH).

Belongs to the krueppel C2H2-type zinc-finger protein family.

It localises to the nucleus. Transcription factor that can both act as an activator or a repressor depending on the context. Plays a central role in BMP signaling and olfactory neurogenesis. Associates with SMADs in response to bmp2 leading to activate transcription of BMP target genes. Acts as a transcriptional repressor involved in terminal olfactory receptor neurons differentiation. Involved in olfactory neurogenesis by participating in a developmental switch that regulates the transition from differentiation to maturation in olfactory receptor neurons. The polypeptide is Zinc finger protein 423 (znf423) (Danio rerio (Zebrafish)).